Reading from the N-terminus, the 146-residue chain is Urease accessory protein UreE 1 (146 aa).

This sequence belongs to the UreE family.

The protein resides in the cytoplasm. Involved in urease metallocenter assembly. Binds nickel. Probably functions as a nickel donor during metallocenter assembly. This Pseudomonas syringae pv. tomato (strain ATCC BAA-871 / DC3000) protein is Urease accessory protein UreE 1.